We begin with the raw amino-acid sequence, 261 residues long: MFEARLVQGSILKKVLEALKDLINEACWDISSSGVNLQSMDSSHVSLVQLTLRSEGFDTYRCDRNLAMGVNLTSMSKILKCAGNEDIITLRAEDNADTLALVFEAPNQEKVSDYEMKLMDLDVEQLGIPEQEYSCVVKMPSGEFARICRDLSHIGDAVVISCAKDGVKFSASGELGNGNIKLSQTSNVDKEEEAVAIEMNEPVQLTFALRYLNFFTKATPLSPTVTLSMSADVPLVVEYKIADMGHLKYYLAPKIEDEEGS.

N6-acetyllysine is present on residues K14, K77, and K80. Residues 61-80 (RCDRNLAMGVNLTSMSKILK) mediate DNA binding. C135 and C162 are disulfide-bonded. K164 is covalently cross-linked (Glycyl lysine isopeptide (Lys-Gly) (interchain with G-Cter in SUMO2); alternate). Residue K164 forms a Glycyl lysine isopeptide (Lys-Gly) (interchain with G-Cter in ubiquitin); alternate linkage. At Y211 the chain carries Phosphotyrosine; by EGFR. K248 is modified (N6-acetyllysine). A Glycyl lysine isopeptide (Lys-Gly) (interchain with G-Cter in SUMO2) cross-link involves residue K254.

The protein belongs to the PCNA family. In terms of assembly, homotrimer. Interacts with p300/EP300; the interaction occurs on chromatin in UV-irradiated damaged cells. Interacts with CREBBP (via transactivation domain and C-terminus); the interaction occurs on chromatin in UV-irradiated damaged cells. Directly interacts with POLD1, POLD3 and POLD4 subunits of the DNA polymerase delta complex, POLD3 being the major interacting partner; the interaction with POLD3 is inhibited by CDKN1A/p21(CIP1). Forms a complex with activator 1 heteropentamer in the presence of ATP. Interacts with EXO1, POLH, POLK, DNMT1, ERCC5, FEN1, CDC6 and POLDIP2. Interacts with POLB. Interacts with APEX2; this interaction is triggered by reactive oxygen species and increased by misincorporation of uracil in nuclear DNA. Forms a ternary complex with DNTTIP2 and core histone. Interacts with KCTD10 and PPP1R15A. Interacts with SMARCA5/SNF2H. Interacts with BAZ1B/WSTF; the interaction is direct and is required for BAZ1B/WSTF binding to replication foci during S phase. Interacts with HLTF and SHPRH. Interacts with NUDT15; this interaction is disrupted in response to UV irradiation and acetylation. Interacts with CDKN1A/p21(CIP1) and CDT1; interacts via their PIP-box which also recruits the DCX(DTL) complex. The interaction with CDKN1A inhibits POLD3 binding. Interacts with DDX11. Interacts with EGFR; positively regulates PCNA. Interacts with PARPBP. Interacts (when ubiquitinated) with SPRTN; leading to enhance RAD18-mediated PCNA ubiquitination. Interacts (when polyubiquitinated) with ZRANB3. Interacts with SMARCAD1. Interacts with CDKN1C. Interacts with PCLAF (via PIP-box). Interacts with RTEL1 (via PIP-box); the interaction is direct and essential for the suppression of telomere fragility. Interacts with FAM111A (via PIP-box); the interaction is direct and required for PCNA loading on chromatin binding. Interacts with LIG1. Interacts with SETMAR. Interacts with ANKRD17. Interacts with FBXO18/FBH1 (via PIP-box); the interaction recruits the DCX(DTL) complex and promotes ubiquitination and degradation of FBXO18/FBH1. Interacts with POLN. Interacts with SDE2 (via PIP-box); the interaction is direct and prevents ultraviolet light induced monoubiquitination. Component of the replisome complex composed of at least DONSON, MCM2, MCM7, PCNA and TICRR; interaction at least with PCNA occurs during DNA replication. Interacts with MAPK15; the interaction is chromatin binding dependent and prevents MDM2-mediated PCNA destruction by inhibiting the association of PCNA with MDM2. Interacts with PARP10 (via PIP-box). Interacts with DDI2. Interacts with HMCES (via PIP-box). Interacts with TRAIP (via PIP-box). Interacts with UHRF2. Interacts with ALKBH2; this interaction is enhanced during the S-phase of the cell cycle. Interacts with ATAD5; the interaction promotes USP1-mediated PCNA deubiquitination. Interacts (when phosphorylated) with GRB2. Interacts with nuclear UNG; this interaction mediates UNG recruitment to S-phase replication foci. Interacts with ERCC6L2 (via an atypical PIP-box); this interaction facilitates cenrtomeric localization of ERCC6L2. Phosphorylated. Phosphorylation at Tyr-211 by EGFR stabilizes chromatin-associated PCNA. Post-translationally, acetylated by CREBBP and p300/EP300; preferentially acetylated by CREBBP on Lys-80, Lys-13 and Lys-14 and on Lys-77 by p300/EP300 upon loading on chromatin in response to UV irradiation. Lysine acetylation disrupts association with chromatin, hence promoting PCNA ubiquitination and proteasomal degradation in response to UV damage in a CREBBP- and EP300-dependent manner. Acetylation disrupts interaction with NUDT15 and promotes degradation. In terms of processing, ubiquitinated. Following DNA damage, can be either monoubiquitinated to stimulate direct bypass of DNA lesions by specialized DNA polymerases or polyubiquitinated to promote recombination-dependent DNA synthesis across DNA lesions by template switching mechanisms. Following induction of replication stress, monoubiquitinated by the UBE2B-RAD18 complex on Lys-164, leading to recruit translesion (TLS) polymerases, which are able to synthesize across DNA lesions in a potentially error-prone manner. An error-free pathway also exists and requires non-canonical polyubiquitination on Lys-164 through 'Lys-63' linkage of ubiquitin moieties by the E2 complex UBE2N-UBE2V2 and the E3 ligases, HLTF, RNF8 and SHPRH. This error-free pathway, also known as template switching, employs recombination mechanisms to synthesize across the lesion, using as a template the undamaged, newly synthesized strand of the sister chromatid. Monoubiquitination at Lys-164 also takes place in undamaged proliferating cells, and is mediated by the DCX(DTL) complex, leading to enhance PCNA-dependent translesion DNA synthesis. Sumoylated during S phase. Methylated on glutamate residues by ARMT1.

Its subcellular location is the nucleus. Its function is as follows. Auxiliary protein of DNA polymerase delta and epsilon, is involved in the control of eukaryotic DNA replication by increasing the polymerase's processibility during elongation of the leading strand. Induces a robust stimulatory effect on the 3'-5' exonuclease and 3'-phosphodiesterase, but not apurinic-apyrimidinic (AP) endonuclease, APEX2 activities. Has to be loaded onto DNA in order to be able to stimulate APEX2. Plays a key role in DNA damage response (DDR) by being conveniently positioned at the replication fork to coordinate DNA replication with DNA repair and DNA damage tolerance pathways. Acts as a loading platform to recruit DDR proteins that allow completion of DNA replication after DNA damage and promote postreplication repair: Monoubiquitinated PCNA leads to recruitment of translesion (TLS) polymerases, while 'Lys-63'-linked polyubiquitination of PCNA is involved in error-free pathway and employs recombination mechanisms to synthesize across the lesion. The sequence is that of Proliferating cell nuclear antigen (PCNA) from Bos taurus (Bovine).